Consider the following 298-residue polypeptide: Pyridoxal 5'-phosphate synthase subunit PdxS (298 aa).

Asp24 serves as a coordination point for D-ribose 5-phosphate. The active-site Schiff-base intermediate with D-ribose 5-phosphate is the Lys81. Residue Gly153 participates in D-ribose 5-phosphate binding. Arg165 provides a ligand contact to D-glyceraldehyde 3-phosphate. Residues Gly214 and 235–236 (GS) contribute to the D-ribose 5-phosphate site.

The protein belongs to the PdxS/SNZ family. In terms of assembly, in the presence of PdxT, forms a dodecamer of heterodimers.

It carries out the reaction aldehydo-D-ribose 5-phosphate + D-glyceraldehyde 3-phosphate + L-glutamine = pyridoxal 5'-phosphate + L-glutamate + phosphate + 3 H2O + H(+). Its pathway is cofactor biosynthesis; pyridoxal 5'-phosphate biosynthesis. Functionally, catalyzes the formation of pyridoxal 5'-phosphate from ribose 5-phosphate (RBP), glyceraldehyde 3-phosphate (G3P) and ammonia. The ammonia is provided by the PdxT subunit. Can also use ribulose 5-phosphate and dihydroxyacetone phosphate as substrates, resulting from enzyme-catalyzed isomerization of RBP and G3P, respectively. The sequence is that of Pyridoxal 5'-phosphate synthase subunit PdxS from Halalkalibacterium halodurans (strain ATCC BAA-125 / DSM 18197 / FERM 7344 / JCM 9153 / C-125) (Bacillus halodurans).